We begin with the raw amino-acid sequence, 381 residues long: Cobalt-precorrin-5B C(1)-methyltransferase (381 aa).

This sequence belongs to the CbiD family.

It carries out the reaction Co-precorrin-5B + S-adenosyl-L-methionine = Co-precorrin-6A + S-adenosyl-L-homocysteine. Its pathway is cofactor biosynthesis; adenosylcobalamin biosynthesis; cob(II)yrinate a,c-diamide from sirohydrochlorin (anaerobic route): step 6/10. Functionally, catalyzes the methylation of C-1 in cobalt-precorrin-5B to form cobalt-precorrin-6A. The sequence is that of Cobalt-precorrin-5B C(1)-methyltransferase from Prochlorococcus marinus (strain NATL2A).